The sequence spans 243 residues: Amphiregulin (243 aa).

The N-terminal stretch at methionine 1–alanine 24 is a signal peptide. Positions alanine 25–glutamine 96 are excised as a propeptide. N-linked (GlcNAc...) asparagine glycosylation is present at asparagine 30. Positions serine 55–serine 67 are enriched in polar residues. Disordered stretches follow at residues serine 55–glutamate 75 and isoleucine 98–asparagine 135. Over residues isoleucine 98–lysine 113 the composition is skewed to basic and acidic residues. The N-linked (GlcNAc...) asparagine glycan is linked to asparagine 103. A compositionally biased stretch (basic residues) spans proline 114–asparagine 135. Positions lysine 133–glycine 173 constitute an EGF-like domain. Cystine bridges form between cysteine 137/cysteine 150, cysteine 145/cysteine 161, and cysteine 163/cysteine 172. The helical transmembrane segment at isoleucine 190–valine 213 threads the bilayer. Asparagine 236 carries N-linked (GlcNAc...) asparagine glycosylation.

The protein belongs to the amphiregulin family. In terms of assembly, the immature precursor interacts with CNIH.

The protein resides in the membrane. Its function is as follows. Ligand of the EGF receptor/EGFR. Autocrine growth factor as well as a mitogen for a broad range of target cells including astrocytes, Schwann cells and fibroblasts. This is Amphiregulin (Areg) from Rattus norvegicus (Rat).